Here is a 284-residue protein sequence, read N- to C-terminus: MTTAHFYCQYCTASLLGKKYVLKDDSPYCVTCYDRVFSNYCEECKKPIESDSKDLCYKDRHWHEGCFKCTKCNHSLVEKPFAAKDERLLCTECYSNECSSKCFHCKRTIMPGSRKMEFKGNYWHETCFVCENCRQPIGTKPLISKESGNYCVPCFEKEFAHYCNFCKKVITSGGITFCDQLWHKECFLCSGCRKDLCEEQFMSRDDYPFCVDCYNHLYANKCVACSKPISGLTGAKFICFQDSQWHSECFNCGKCSVSLVGKGFLTQNKEIFCQKCGSGMDTDI.

A C4-type zinc finger spans residues 8 to 32 (CQYCTASLLGKKYVLKDDSPYCVTC). 4 LIM zinc-binding domains span residues 39–100 (NYCE…ECSS), 101–160 (KCFH…KEFA), 161–220 (HYCN…LYAN), and 223–283 (VACS…MDTD).

As to quaternary structure, interacts with CREM (via the third LIM domain). Interacts (via second LIM domain) with SPAG8. As to expression, testis-specific (at protein level).

The protein localises to the nucleus. Functionally, may be involved in the regulation of spermatogenesis. Stimulates CREM transcriptional activity in a phosphorylation-independent manner. This chain is Four and a half LIM domains protein 5 (FHL5), found in Homo sapiens (Human).